A 407-amino-acid polypeptide reads, in one-letter code: Protein-glutamine gamma-glutamyltransferase (407 aa).

Residues 1–31 (MRIRRRALVFATMSAVLCTAGFMPSAGEAAA) form the signal peptide. Positions 32–76 (DNGAGEETKSYAETYRLTADDVANINALNESAPAASSAGPSFRAP) are excised as a propeptide. The span at 62–72 (SAPAASSAGPS) shows a compositional bias: low complexity. Residues 62–98 (SAPAASSAGPSFRAPDSDDRVTPPAEPLDRMPDPYRP) are disordered. Over residues 76–94 (PDSDDRVTPPAEPLDRMPD) the composition is skewed to basic and acidic residues. The active site involves C140. The segment at 282 to 322 (QDRSSSADKRKYGDPDAFRPAPGTGLVDMSRDRNIPRSPTS) is disordered. Positions 286 to 298 (SSADKRKYGDPDA) are enriched in basic and acidic residues. Catalysis depends on residues D331 and H350.

The protein belongs to the bacterial TGase family.

It catalyses the reaction L-glutaminyl-[protein] + L-lysyl-[protein] = [protein]-L-lysyl-N(6)-5-L-glutamyl-[protein] + NH4(+). Catalyzes the cross-linking of proteins and the conjugation of polyamines to proteins. The protein is Protein-glutamine gamma-glutamyltransferase of Streptomyces mobaraensis (Streptoverticillium mobaraense).